The sequence spans 140 residues: RxLR effector protein Avh23 (140 aa).

The signal sequence occupies residues 1-21 (MRLTYFLTVIVVATLHAGGTA). Positions 54–72 (RMLRKVKEDTVSKKDHEER) match the RxLR-dEER motif. The ADA2-binding IR1 repeat unit spans residues 100–113 (QGAFQRQNAFVNRD). An ADA2-binding IR2 repeat occupies 114–127 (QGAFQRQNAFVKRA).

The protein belongs to the RxLR effector family. Interacts with host histone acetyl transferase SAGA complex subunit ADA2.

It is found in the secreted. The protein localises to the host nucleus. It localises to the host cytoplasm. Effector that suppresses plant defense responses during the early stages of pathogen infection. Suppresses cell death induced by effectors and PAMPs in plant hosts. Acts as a modulator of histone acetyltransferase (HAT) in plants. Avh23 binds to the ADA2 subunit of the HAT complex SAGA and disrupts its assembly by interfering with the association of ADA2 with the catalytic subunit GCN5. As such, Avh23 suppresses H3K9 acetylation mediated by the ADA2/GCN5 module and increases plant susceptibility. This chain is RxLR effector protein Avh23, found in Phytophthora sojae (Soybean stem and root rot agent).